A 213-amino-acid polypeptide reads, in one-letter code: Phosphatidylserine decarboxylase proenzyme (213 aa).

Catalysis depends on Ser183, which acts as the Schiff-base intermediate with substrate; via pyruvic acid. Residue Ser183 is modified to Pyruvic acid (Ser); by autocatalysis.

The protein belongs to the phosphatidylserine decarboxylase family. PSD-A subfamily. Heterodimer of a large membrane-associated beta subunit and a small pyruvoyl-containing alpha subunit. Pyruvate is required as a cofactor. Post-translationally, is synthesized initially as an inactive proenzyme. Formation of the active enzyme involves a self-maturation process in which the active site pyruvoyl group is generated from an internal serine residue via an autocatalytic post-translational modification. Two non-identical subunits are generated from the proenzyme in this reaction, and the pyruvate is formed at the N-terminus of the alpha chain, which is derived from the carboxyl end of the proenzyme. The post-translation cleavage follows an unusual pathway, termed non-hydrolytic serinolysis, in which the side chain hydroxyl group of the serine supplies its oxygen atom to form the C-terminus of the beta chain, while the remainder of the serine residue undergoes an oxidative deamination to produce ammonia and the pyruvoyl prosthetic group on the alpha chain.

The protein resides in the cell membrane. The catalysed reaction is a 1,2-diacyl-sn-glycero-3-phospho-L-serine + H(+) = a 1,2-diacyl-sn-glycero-3-phosphoethanolamine + CO2. The protein operates within phospholipid metabolism; phosphatidylethanolamine biosynthesis; phosphatidylethanolamine from CDP-diacylglycerol: step 2/2. In terms of biological role, catalyzes the formation of phosphatidylethanolamine (PtdEtn) from phosphatidylserine (PtdSer). In Syntrophus aciditrophicus (strain SB), this protein is Phosphatidylserine decarboxylase proenzyme.